The sequence spans 250 residues: MGKSYPTVSPDYQKAIEKAKRKLRGFIAEKKCAPLILRLAWHSAGTFDSKTKTGGPFGTIKHQAELAHGANNGLDIAVRLLEPIKEQFPIVSYADFYQLAGVVAVEITGGPEVPFHPGREDKPEPPPEGRLPDATKGSDHLRDVFGKAMGLSDQDIVALSGGHTIGAAHKERSGFEGPWTSNPLIFDNSYFTELLTGEKDGLLQLPSDKALLTDSVFRPLVEKYAADEDVFFADYAEAHLKLSELGFAEA.

The Proton acceptor role is filled by histidine 42. Residues 113–137 (VPFHPGREDKPEPPPEGRLPDATKG) are disordered. Over residues 117–137 (PGREDKPEPPPEGRLPDATKG) the composition is skewed to basic and acidic residues. Histidine 163 lines the heme b pocket. K(+) contacts are provided by threonine 164, threonine 180, asparagine 182, isoleucine 185, and aspartate 187.

Belongs to the peroxidase family. Ascorbate peroxidase subfamily. Heme b serves as cofactor.

It localises to the cytoplasm. The catalysed reaction is L-ascorbate + H2O2 = L-dehydroascorbate + 2 H2O. In terms of biological role, plays a key role in hydrogen peroxide removal. This chain is L-ascorbate peroxidase, cytosolic (APX1), found in Pisum sativum (Garden pea).